The sequence spans 411 residues: Serine hydroxymethyltransferase (411 aa).

120–122 (GHL) is a binding site for (6S)-5,6,7,8-tetrahydrofolate. Lysine 225 is modified (N6-(pyridoxal phosphate)lysine). (6S)-5,6,7,8-tetrahydrofolate contacts are provided by residues glutamate 241 and 350–352 (SPF).

This sequence belongs to the SHMT family. As to quaternary structure, homodimer. Pyridoxal 5'-phosphate serves as cofactor.

The protein localises to the cytoplasm. It catalyses the reaction (6R)-5,10-methylene-5,6,7,8-tetrahydrofolate + glycine + H2O = (6S)-5,6,7,8-tetrahydrofolate + L-serine. The protein operates within one-carbon metabolism; tetrahydrofolate interconversion. Its pathway is amino-acid biosynthesis; glycine biosynthesis; glycine from L-serine: step 1/1. Its function is as follows. Catalyzes the reversible interconversion of serine and glycine with tetrahydrofolate (THF) serving as the one-carbon carrier. This reaction serves as the major source of one-carbon groups required for the biosynthesis of purines, thymidylate, methionine, and other important biomolecules. Also exhibits THF-independent aldolase activity toward beta-hydroxyamino acids, producing glycine and aldehydes, via a retro-aldol mechanism. The polypeptide is Serine hydroxymethyltransferase (Limosilactobacillus fermentum (strain NBRC 3956 / LMG 18251) (Lactobacillus fermentum)).